The chain runs to 465 residues: Anthocyanidin 3-O-glucosyltransferase 2 (465 aa).

Catalysis depends on His22, which acts as the Proton acceptor. The an anthocyanidin site is built by His22 and Gln87. The active-site Charge relay is the Asp122. Thr145 is a UDP-alpha-D-glucose binding site. An an anthocyanidin-binding site is contributed by His154. UDP-alpha-D-glucose contacts are provided by Ala345, Gln347, His362, Trp365, Asn366, Ser367, and Glu370. Gly385 contacts an anthocyanidin. UDP-alpha-D-glucose contacts are provided by Asp386 and Gln387.

It belongs to the UDP-glycosyltransferase family. In terms of tissue distribution, highest expression detected in fruit, with very low levels detected in petal and leaf.

It catalyses the reaction an anthocyanidin + UDP-alpha-D-glucose + H(+) = an anthocyanidin 3-O-beta-D-glucoside + UDP. It carries out the reaction pelargonidin + UDP-alpha-D-glucose = pelargonidin 3-O-beta-D-glucoside + UDP. The enzyme catalyses cyanidin + UDP-alpha-D-glucose = cyanidin 3-O-beta-D-glucoside + UDP + H(+). It participates in pigment biosynthesis; anthocyanin biosynthesis. Functionally, in the presence of other necessary color factors, this glycosylation reaction allows the accumulation of anthocyanin pigments. Anthocyanidins are the preferred substrates, while flavonols are only a minor substrate in vitro. The protein is Anthocyanidin 3-O-glucosyltransferase 2 of Fragaria ananassa (Strawberry).